Reading from the N-terminus, the 409-residue chain is Gamma-glutamyl phosphate reductase (409 aa).

The protein belongs to the gamma-glutamyl phosphate reductase family.

Its subcellular location is the cytoplasm. The catalysed reaction is L-glutamate 5-semialdehyde + phosphate + NADP(+) = L-glutamyl 5-phosphate + NADPH + H(+). Its pathway is amino-acid biosynthesis; L-proline biosynthesis; L-glutamate 5-semialdehyde from L-glutamate: step 2/2. In terms of biological role, catalyzes the NADPH-dependent reduction of L-glutamate 5-phosphate into L-glutamate 5-semialdehyde and phosphate. The product spontaneously undergoes cyclization to form 1-pyrroline-5-carboxylate. The chain is Gamma-glutamyl phosphate reductase from Koribacter versatilis (strain Ellin345).